Consider the following 281-residue polypeptide: Diaminopimelate epimerase (281 aa).

Substrate contacts are provided by asparagine 13 and asparagine 66. Cysteine 75 functions as the Proton donor in the catalytic mechanism. Substrate is bound by residues 76–77, asparagine 164, asparagine 197, and 215–216; these read GN and ER. The Proton acceptor role is filled by cysteine 224. 225-226 contributes to the substrate binding site; that stretch reads GT.

Belongs to the diaminopimelate epimerase family. Homodimer.

The protein localises to the cytoplasm. It carries out the reaction (2S,6S)-2,6-diaminopimelate = meso-2,6-diaminopimelate. It functions in the pathway amino-acid biosynthesis; L-lysine biosynthesis via DAP pathway; DL-2,6-diaminopimelate from LL-2,6-diaminopimelate: step 1/1. Its function is as follows. Catalyzes the stereoinversion of LL-2,6-diaminopimelate (L,L-DAP) to meso-diaminopimelate (meso-DAP), a precursor of L-lysine and an essential component of the bacterial peptidoglycan. This is Diaminopimelate epimerase from Rippkaea orientalis (strain PCC 8801 / RF-1) (Cyanothece sp. (strain PCC 8801)).